We begin with the raw amino-acid sequence, 468 residues long: Interleukin-9 receptor (468 aa).

Residues 1–37 (MALGRCIAEGWTLERVAVKQVSWFLIYSWVCSGVCRG) form the signal peptide. The Extracellular segment spans residues 38-270 (VSVPEQGGGG…GLLVPRWQWS (233 aa)). 2 N-linked (GlcNAc...) asparagine glycosylation sites follow: N116 and N155. The Fibronectin type-III domain maps to 148 to 256 (PPSDLQSNVS…WSQPVSFPSP (109 aa)). Residues 244–248 (WSEWS) carry the WSXWS motif motif. The helical transmembrane segment at 271–291 (ASILVVVPIFLLLTGFVHLLF) threads the bilayer. Residues 292–468 (KLSPRLKRIF…PVALPVSSRA (177 aa)) are Cytoplasmic-facing. A Box 1 motif motif is present at residues 301–309 (FYQNIPSPE). Residues 407-426 (PQEDWAPLGSARPPPPDSDS) are disordered.

Belongs to the type I cytokine receptor family. Type 4 subfamily. In terms of assembly, interacts with IL9.

It localises to the cell membrane. It is found in the secreted. Its function is as follows. Plays an important role in the immune response against parasites by acting as a receptor of IL9. In Mus musculus (Mouse), this protein is Interleukin-9 receptor (Il9r).